The chain runs to 540 residues: Phenylalanine--tRNA ligase beta subunit (540 aa).

A B5 domain is found at 268-343 (LQHKSIKITA…ITYGYNNLSP (76 aa)). The Mg(2+) site is built by Asp-321, Asp-327, Glu-330, and Glu-331.

It belongs to the phenylalanyl-tRNA synthetase beta subunit family. Type 2 subfamily. In terms of assembly, tetramer of two alpha and two beta subunits. Mg(2+) serves as cofactor.

The protein localises to the cytoplasm. It carries out the reaction tRNA(Phe) + L-phenylalanine + ATP = L-phenylalanyl-tRNA(Phe) + AMP + diphosphate + H(+). The polypeptide is Phenylalanine--tRNA ligase beta subunit (Sulfurisphaera tokodaii (strain DSM 16993 / JCM 10545 / NBRC 100140 / 7) (Sulfolobus tokodaii)).